A 218-amino-acid polypeptide reads, in one-letter code: Small ribosomal subunit protein uS3c (218 aa).

The 72-residue stretch at 47-118 (VQKNIRISSG…KLNIAITRIS (72 aa)) folds into the KH type-2 domain.

The protein belongs to the universal ribosomal protein uS3 family. As to quaternary structure, part of the 30S ribosomal subunit.

The protein resides in the plastid. Its subcellular location is the chloroplast. In Lepidium virginicum (Virginia pepperweed), this protein is Small ribosomal subunit protein uS3c (rps3).